The primary structure comprises 461 residues: Cysteine--tRNA ligase (461 aa).

C31 contributes to the Zn(2+) binding site. Positions 33 to 43 match the 'HIGH' region motif; the sequence is PTVYDFAHIGN. Positions 219, 244, and 248 each coordinate Zn(2+). The short motif at 277–281 is the 'KMSKS' region element; that stretch reads KMSKS. K280 is a binding site for ATP. Residues 436-452 are compositionally biased toward basic and acidic residues; it reads SEKGIQLKDGKDKETGE. The segment at 436 to 461 is disordered; sequence SEKGIQLKDGKDKETGERTTTWELKR.

It belongs to the class-I aminoacyl-tRNA synthetase family. Monomer. Zn(2+) is required as a cofactor.

The protein resides in the cytoplasm. The enzyme catalyses tRNA(Cys) + L-cysteine + ATP = L-cysteinyl-tRNA(Cys) + AMP + diphosphate. In Agrobacterium fabrum (strain C58 / ATCC 33970) (Agrobacterium tumefaciens (strain C58)), this protein is Cysteine--tRNA ligase.